The chain runs to 337 residues: Cytochrome P450 monooxygenase dpmpJ (337 aa).

The helical transmembrane segment at 4-24 threads the bilayer; it reads LILHHPYASLAAGILLYFFCL. N158 carries an N-linked (GlcNAc...) asparagine glycan.

The protein belongs to the cytochrome P450 family. Requires heme as cofactor.

The protein resides in the membrane. The protein operates within secondary metabolite biosynthesis; terpenoid biosynthesis. Functionally, cytochrome P450 monooxygenase; part of the gene cluster that mediates the biosynthesis of diterpenoid pyrones. The first step of the pathway is the synthesis of the alpha-pyrone moiety by the polyketide synthase dpmpA via condensation of one acetyl-CoA starter unit with 3 malonyl-CoA units and 2 methylations. The alpha-pyrone is then combined with geranylgeranyl pyrophosphate (GGPP) formed by the GGPP synthase dpmpD through the action of the prenyltransferase dpmpC to yield a linear alpha-pyrone diterpenoid. Subsequent steps in the diterpenoid pyrone biosynthetic pathway involve the decalin core formation, which is initiated by the epoxidation of the C10-C11 olefin by the FAD-dependent oxidoreductase dpmpE, and is followed by a cyclization cascade catalyzed by the terpene cyclase dpmpB. The short chain dehydrogenase/reductase dpmpG then oxidizes the 8S hydroxy group to a ketone and the short chain dehydrogenase/reductase dpmpH reduces the ketone to the 8R hydroxy group to yield higginsianin B. Higginsianin B is further methylated by the methyltransferase dpmpI to produce the intermediate named FDDP B. The cytochrome P450 monooxygenase dpmpJ then oxidizes the C-26 methyl to primary alcohol, producing the final diterpenoid pyrone with a C-26 primary alcohol on the gamma-pyrone moiety named FDDP C. This Macrophomina phaseolina (strain MS6) (Charcoal rot fungus) protein is Cytochrome P450 monooxygenase dpmpJ.